Consider the following 83-residue polypeptide: Sulfur carrier protein TusA (83 aa).

Cys19 acts as the Cysteine persulfide intermediate in catalysis.

It belongs to the sulfur carrier protein TusA family.

The protein resides in the cytoplasm. In terms of biological role, sulfur carrier protein which probably makes part of a sulfur-relay system. This is Sulfur carrier protein TusA from Aliivibrio fischeri (strain ATCC 700601 / ES114) (Vibrio fischeri).